Here is a 189-residue protein sequence, read N- to C-terminus: Adenylate kinase homolog MTH_1663 (189 aa).

Position 12–20 (12–20) interacts with ATP; that stretch reads GVPGTGKTT.

The protein belongs to the archaeal adenylate kinase family.

The chain is Adenylate kinase homolog MTH_1663 from Methanothermobacter thermautotrophicus (strain ATCC 29096 / DSM 1053 / JCM 10044 / NBRC 100330 / Delta H) (Methanobacterium thermoautotrophicum).